The sequence spans 434 residues: UPF0053 protein YrkA (434 aa).

In terms of domain architecture, CNNM transmembrane spans 1–201 (MTTINLIIFT…YKSGEINQNE (201 aa)). 3 helical membrane passes run 7–27 (IIFTLLIVLTAFFVATEFAIV), 64–84 (LGITVTALGIGWVGESTFEVI), and 101–121 (VLILVIAFVMATFLHVVVGEL). CBS domains follow at residues 220-282 (MIPR…KIKE) and 289-346 (HINP…IRDE).

It belongs to the UPF0053 family.

The protein localises to the cell membrane. The chain is UPF0053 protein YrkA (yrkA) from Bacillus subtilis (strain 168).